Reading from the N-terminus, the 96-residue chain is Large ribosomal subunit protein uL23 (96 aa).

The protein belongs to the universal ribosomal protein uL23 family. As to quaternary structure, part of the 50S ribosomal subunit. Contacts protein L29, and trigger factor when it is bound to the ribosome.

In terms of biological role, one of the early assembly proteins it binds 23S rRNA. One of the proteins that surrounds the polypeptide exit tunnel on the outside of the ribosome. Forms the main docking site for trigger factor binding to the ribosome. The chain is Large ribosomal subunit protein uL23 from Bacillus cereus (strain ATCC 10987 / NRS 248).